Reading from the N-terminus, the 321-residue chain is Glucokinase (321 aa).

Position 8-13 (8-13 (GDVGGT)) interacts with ATP.

Belongs to the bacterial glucokinase family.

It localises to the cytoplasm. The catalysed reaction is D-glucose + ATP = D-glucose 6-phosphate + ADP + H(+). This is Glucokinase from Escherichia coli O127:H6 (strain E2348/69 / EPEC).